We begin with the raw amino-acid sequence, 341 residues long: UDP-3-O-acylglucosamine N-acyltransferase 2 (341 aa).

The active-site Proton acceptor is H254.

It belongs to the transferase hexapeptide repeat family. LpxD subfamily. Homotrimer.

The catalysed reaction is a UDP-3-O-[(3R)-3-hydroxyacyl]-alpha-D-glucosamine + a (3R)-hydroxyacyl-[ACP] = a UDP-2-N,3-O-bis[(3R)-3-hydroxyacyl]-alpha-D-glucosamine + holo-[ACP] + H(+). The protein operates within bacterial outer membrane biogenesis; LPS lipid A biosynthesis. Its function is as follows. Catalyzes the N-acylation of UDP-3-O-acylglucosamine using 3-hydroxyacyl-ACP as the acyl donor. Is involved in the biosynthesis of lipid A, a phosphorylated glycolipid that anchors the lipopolysaccharide to the outer membrane of the cell. The protein is UDP-3-O-acylglucosamine N-acyltransferase 2 of Nitrobacter winogradskyi (strain ATCC 25391 / DSM 10237 / CIP 104748 / NCIMB 11846 / Nb-255).